Consider the following 243-residue polypeptide: tRNA (guanine-N(1)-)-methyltransferase (243 aa).

Residues Gly-123 and 143-148 (LGDFVM) contribute to the S-adenosyl-L-methionine site.

It belongs to the RNA methyltransferase TrmD family. Homodimer.

It localises to the cytoplasm. It carries out the reaction guanosine(37) in tRNA + S-adenosyl-L-methionine = N(1)-methylguanosine(37) in tRNA + S-adenosyl-L-homocysteine + H(+). Specifically methylates guanosine-37 in various tRNAs. This is tRNA (guanine-N(1)-)-methyltransferase from Ruegeria pomeroyi (strain ATCC 700808 / DSM 15171 / DSS-3) (Silicibacter pomeroyi).